The primary structure comprises 295 residues: ATP synthase gamma chain (295 aa).

Belongs to the ATPase gamma chain family. F-type ATPases have 2 components, CF(1) - the catalytic core - and CF(0) - the membrane proton channel. CF(1) has five subunits: alpha(3), beta(3), gamma(1), delta(1), epsilon(1). CF(0) has three main subunits: a, b and c.

It is found in the cell inner membrane. Its function is as follows. Produces ATP from ADP in the presence of a proton gradient across the membrane. The gamma chain is believed to be important in regulating ATPase activity and the flow of protons through the CF(0) complex. The sequence is that of ATP synthase gamma chain from Aliarcobacter butzleri (strain RM4018) (Arcobacter butzleri).